Reading from the N-terminus, the 511-residue chain is Glucans biosynthesis protein G (511 aa).

The N-terminal stretch at 1–22 (MMKMRWLSAAVMLTLYTSSSWA) is a signal peptide.

This sequence belongs to the OpgD/OpgG family.

It is found in the periplasm. It participates in glycan metabolism; osmoregulated periplasmic glucan (OPG) biosynthesis. Involved in the biosynthesis of osmoregulated periplasmic glucans (OPGs). The polypeptide is Glucans biosynthesis protein G (Escherichia coli O8 (strain IAI1)).